Consider the following 123-residue polypeptide: uncharacterized protein (123 aa).

A helical membrane pass occupies residues 34-53 (LPFFFLFLGNLGKFFFLWPL).

The protein localises to the membrane. This is an uncharacterized protein from Saccharomyces cerevisiae (strain ATCC 204508 / S288c) (Baker's yeast).